Reading from the N-terminus, the 70-residue chain is Beta-insect excitatory toxin LqqIT1 (70 aa).

The 64-residue stretch at 2–65 (KNGYAVDSSG…ISDARKKYCD (64 aa)) folds into the LCN-type CS-alpha/beta domain. Cystine bridges form between Cys-16/Cys-37, Cys-22/Cys-42, Cys-26/Cys-44, and Cys-38/Cys-64.

Belongs to the long (4 C-C) scorpion toxin superfamily. Sodium channel inhibitor family. Beta subfamily. In terms of tissue distribution, expressed by the venom gland.

It localises to the secreted. Excitatory insect beta-toxins induce a spastic paralysis. They bind voltage-independently at site-4 of sodium channels (Nav) and shift the voltage of activation toward more negative potentials thereby affecting sodium channel activation and promoting spontaneous and repetitive firing. In vivo, this toxin induces a fast excitatory contraction paralysis on fly larvae. It is active only on insects. The sequence is that of Beta-insect excitatory toxin LqqIT1 from Leiurus quinquestriatus quinquestriatus (Egyptian scorpion).